A 163-amino-acid polypeptide reads, in one-letter code: Transcription elongation factor GreA (163 aa).

A coiled-coil region spans residues 45 to 65 (NAEYHAAREKQAFIEARINEL).

This sequence belongs to the GreA/GreB family.

In terms of biological role, necessary for efficient RNA polymerase transcription elongation past template-encoded arresting sites. The arresting sites in DNA have the property of trapping a certain fraction of elongating RNA polymerases that pass through, resulting in locked ternary complexes. Cleavage of the nascent transcript by cleavage factors such as GreA or GreB allows the resumption of elongation from the new 3'terminus. GreA releases sequences of 2 to 3 nucleotides. The chain is Transcription elongation factor GreA from Helicobacter hepaticus (strain ATCC 51449 / 3B1).